Consider the following 143-residue polypeptide: UPF0201 protein Pars_1985 (143 aa).

It belongs to the UPF0201 family.

In Pyrobaculum arsenaticum (strain DSM 13514 / JCM 11321 / PZ6), this protein is UPF0201 protein Pars_1985.